Reading from the N-terminus, the 458-residue chain is O-acyltransferase WSD (458 aa).

His-133 functions as the Proton acceptor in the catalytic mechanism.

It belongs to the long-chain O-acyltransferase family.

It catalyses the reaction a long chain fatty alcohol + a fatty acyl-CoA = a wax ester + CoA. The catalysed reaction is an acyl-CoA + a 1,2-diacyl-sn-glycerol = a triacyl-sn-glycerol + CoA. Its pathway is glycerolipid metabolism; triacylglycerol biosynthesis. In terms of biological role, bifunctional wax ester synthase/diacylglycerol acyltransferase (WS and DGAT). Catalyzes the terminal and only committed step in triacylglycerol synthesis by using diacylglycerol and fatty acyl CoA as substrates. Required for storage lipid synthesis. WS uses C(12)-CoA to C(18)-CoA substrates whereas DGAT prefers C(20)-CoA. Upon expression in E.coli and Pseudomonas citronellolis (DSM 50332) both WS and DGAT activities increase. The sequence is that of O-acyltransferase WSD (wax-dgaT) from Acinetobacter baylyi (strain ATCC 33305 / BD413 / ADP1).